Reading from the N-terminus, the 310-residue chain is Ribose-phosphate pyrophosphokinase (310 aa).

ATP contacts are provided by residues 34-36 and 93-94; these read DME and RQ. Positions 127 and 167 each coordinate Mg(2+). Lys-190 is an active-site residue. Residues Arg-192, Asp-216, and 220–224 contribute to the D-ribose 5-phosphate site; that span reads DSGGT.

This sequence belongs to the ribose-phosphate pyrophosphokinase family. Class I subfamily. As to quaternary structure, homohexamer. Mg(2+) is required as a cofactor.

Its subcellular location is the cytoplasm. The enzyme catalyses D-ribose 5-phosphate + ATP = 5-phospho-alpha-D-ribose 1-diphosphate + AMP + H(+). Its pathway is metabolic intermediate biosynthesis; 5-phospho-alpha-D-ribose 1-diphosphate biosynthesis; 5-phospho-alpha-D-ribose 1-diphosphate from D-ribose 5-phosphate (route I): step 1/1. Involved in the biosynthesis of the central metabolite phospho-alpha-D-ribosyl-1-pyrophosphate (PRPP) via the transfer of pyrophosphoryl group from ATP to 1-hydroxyl of ribose-5-phosphate (Rib-5-P). This Granulibacter bethesdensis (strain ATCC BAA-1260 / CGDNIH1) protein is Ribose-phosphate pyrophosphokinase.